We begin with the raw amino-acid sequence, 259 residues long: Adenosylcobinamide-GDP ribazoletransferase (259 aa).

5 helical membrane passes run 43–63 (LAGA…LGLG), 64–84 (ASSM…TGAL), 116–136 (FGVL…ASLV), 141–161 (PINV…LMVW), and 185–205 (TLYT…APVT).

Belongs to the CobS family. The cofactor is Mg(2+).

Its subcellular location is the cell inner membrane. The catalysed reaction is alpha-ribazole + adenosylcob(III)inamide-GDP = adenosylcob(III)alamin + GMP + H(+). The enzyme catalyses alpha-ribazole 5'-phosphate + adenosylcob(III)inamide-GDP = adenosylcob(III)alamin 5'-phosphate + GMP + H(+). It participates in cofactor biosynthesis; adenosylcobalamin biosynthesis; adenosylcobalamin from cob(II)yrinate a,c-diamide: step 7/7. Functionally, joins adenosylcobinamide-GDP and alpha-ribazole to generate adenosylcobalamin (Ado-cobalamin). Also synthesizes adenosylcobalamin 5'-phosphate from adenosylcobinamide-GDP and alpha-ribazole 5'-phosphate. This Allorhizobium ampelinum (strain ATCC BAA-846 / DSM 112012 / S4) (Agrobacterium vitis (strain S4)) protein is Adenosylcobinamide-GDP ribazoletransferase.